A 157-amino-acid polypeptide reads, in one-letter code: 2-C-methyl-D-erythritol 2,4-cyclodiphosphate synthase (157 aa).

Residues D8 and H10 each contribute to the a divalent metal cation site. 4-CDP-2-C-methyl-D-erythritol 2-phosphate-binding positions include 8–10 and 34–35; these read DVH and HS. H42 serves as a coordination point for a divalent metal cation. 4-CDP-2-C-methyl-D-erythritol 2-phosphate is bound by residues 56–58, 61–65, 100–106, 132–135, F139, and R142; these read DIG, FPDTD, AQAPKMA, and TTTE.

Belongs to the IspF family. As to quaternary structure, homotrimer. A divalent metal cation serves as cofactor.

The enzyme catalyses 4-CDP-2-C-methyl-D-erythritol 2-phosphate = 2-C-methyl-D-erythritol 2,4-cyclic diphosphate + CMP. It functions in the pathway isoprenoid biosynthesis; isopentenyl diphosphate biosynthesis via DXP pathway; isopentenyl diphosphate from 1-deoxy-D-xylulose 5-phosphate: step 4/6. Its function is as follows. Involved in the biosynthesis of isopentenyl diphosphate (IPP) and dimethylallyl diphosphate (DMAPP), two major building blocks of isoprenoid compounds. Catalyzes the conversion of 4-diphosphocytidyl-2-C-methyl-D-erythritol 2-phosphate (CDP-ME2P) to 2-C-methyl-D-erythritol 2,4-cyclodiphosphate (ME-CPP) with a corresponding release of cytidine 5-monophosphate (CMP). The sequence is that of 2-C-methyl-D-erythritol 2,4-cyclodiphosphate synthase from Pseudomonas aeruginosa (strain ATCC 15692 / DSM 22644 / CIP 104116 / JCM 14847 / LMG 12228 / 1C / PRS 101 / PAO1).